Here is a 243-residue protein sequence, read N- to C-terminus: Mitochondrial import inner membrane translocase subunit TIM17-2 (243 aa).

Transmembrane regions (helical) follow at residues 19-36, 66-83, 90-109, and 115-137; these read IGGA…FHFI, FAVW…MVYL, WNSI…RQGA, and SAIF…NKVL. A run of 10 repeats spans residues 149–151, 152–154, 155–157, 158–160, 161–163, 164–166, 167–169, 170–172, 173–175, and 176–178. The 10 X approximate repeats GMQ/P stretch occupies residues 149-178; sequence GMQGMPGMQGMQGMPGMPGMQGMPGMQGMQ. Low complexity predominate over residues 166–183; the sequence is PGMQGMPGMQGMQMGQMQ. A disordered region spans residues 166 to 243; sequence PGMQGMPGMQ…APPVPSFEFK (78 aa). Residues 184–198 show a composition bias toward polar residues; sequence SQAQIRSESQNQNTA. Residues 211-228 are compositionally biased toward basic and acidic residues; the sequence is FDKKKEEVQPGSESKTEV.

It belongs to the Tim17/Tim22/Tim23 family. As to quaternary structure, component of the TIM17:23 complex at least composed of TIM23, TIM17 and TIM50. The complex interacts with the TIM44 component of the PAM complex. Interacts with TIM23-2. In terms of tissue distribution, expressed in roots, flowers, leaves and young cotyledons.

It localises to the mitochondrion inner membrane. The protein localises to the mitochondrion outer membrane. Essential component of the TIM17:23 complex, a complex that mediates the translocation of transit peptide-containing proteins across the mitochondrial inner membrane. Links the inner and outer membranes. The polypeptide is Mitochondrial import inner membrane translocase subunit TIM17-2 (TIM17-2) (Arabidopsis thaliana (Mouse-ear cress)).